Here is a 202-residue protein sequence, read N- to C-terminus: Pyridoxal 5'-phosphate synthase subunit PdxT (202 aa).

Position 49-51 (49-51 (GES)) interacts with L-glutamine. C81 (nucleophile) is an active-site residue. L-glutamine-binding positions include R110 and 139–140 (IR). Residues H182 and E184 each act as charge relay system in the active site.

The protein belongs to the glutaminase PdxT/SNO family. In terms of assembly, in the presence of PdxS, forms a dodecamer of heterodimers. Only shows activity in the heterodimer.

The enzyme catalyses aldehydo-D-ribose 5-phosphate + D-glyceraldehyde 3-phosphate + L-glutamine = pyridoxal 5'-phosphate + L-glutamate + phosphate + 3 H2O + H(+). It catalyses the reaction L-glutamine + H2O = L-glutamate + NH4(+). Its pathway is cofactor biosynthesis; pyridoxal 5'-phosphate biosynthesis. Its function is as follows. Catalyzes the hydrolysis of glutamine to glutamate and ammonia as part of the biosynthesis of pyridoxal 5'-phosphate. The resulting ammonia molecule is channeled to the active site of PdxS. The chain is Pyridoxal 5'-phosphate synthase subunit PdxT from Rhodococcus opacus (strain B4).